The following is a 359-amino-acid chain: RNA-binding protein 4B (359 aa).

2 consecutive RRM domains span residues Val2–Asn72 and Thr78–Ser148. The CCHC-type zinc finger occupies Ser160–Val177. Residues Ala196–Phe359 are interaction with TNPO3.

Interacts with TNPO3, which may mediate nuclear import of the protein. Expressed in liver and kidney (at protein level). Ubiquitously expressed.

It is found in the nucleus. Its subcellular location is the nucleolus. Required for the translational activation of PER1 mRNA in response to circadian clock. Binds directly to the 3'-UTR of the PER1 mRNA. This is RNA-binding protein 4B (RBM4B) from Homo sapiens (Human).